Reading from the N-terminus, the 186-residue chain is NADH-dependent FMN reductase SfnE (186 aa).

The protein belongs to the SsuE family.

It catalyses the reaction FMNH2 + NAD(+) = FMN + NADH + 2 H(+). Functionally, involved in the dimethyl sulfide degradation pathway. Catalyzes the NADH-dependent reduction of FMN. This is NADH-dependent FMN reductase SfnE from Pseudomonas putida (Arthrobacter siderocapsulatus).